Consider the following 256-residue polypeptide: Type III pantothenate kinase (256 aa).

6-13 (DIGNSSIV) lines the ATP pocket. Substrate-binding positions include Tyr101 and 108-111 (GADR). Asp110 (proton acceptor) is an active-site residue. Asp130 provides a ligand contact to K(+). Thr133 serves as a coordination point for ATP. Residue Thr185 coordinates substrate.

It belongs to the type III pantothenate kinase family. In terms of assembly, homodimer. NH4(+) serves as cofactor. It depends on K(+) as a cofactor.

The protein localises to the cytoplasm. The catalysed reaction is (R)-pantothenate + ATP = (R)-4'-phosphopantothenate + ADP + H(+). It participates in cofactor biosynthesis; coenzyme A biosynthesis; CoA from (R)-pantothenate: step 1/5. Functionally, catalyzes the phosphorylation of pantothenate (Pan), the first step in CoA biosynthesis. In Shouchella clausii (strain KSM-K16) (Alkalihalobacillus clausii), this protein is Type III pantothenate kinase.